The chain runs to 129 residues: Small ribosomal subunit protein uS12 (129 aa).

D89 carries the post-translational modification 3-methylthioaspartic acid. The disordered stretch occupies residues 110–129 (RKQGRSRYGAPRKQVVATKK).

It belongs to the universal ribosomal protein uS12 family. In terms of assembly, part of the 30S ribosomal subunit. Contacts proteins S8 and S17. May interact with IF1 in the 30S initiation complex.

Its function is as follows. With S4 and S5 plays an important role in translational accuracy. Functionally, interacts with and stabilizes bases of the 16S rRNA that are involved in tRNA selection in the A site and with the mRNA backbone. Located at the interface of the 30S and 50S subunits, it traverses the body of the 30S subunit contacting proteins on the other side and probably holding the rRNA structure together. The combined cluster of proteins S8, S12 and S17 appears to hold together the shoulder and platform of the 30S subunit. The protein is Small ribosomal subunit protein uS12 of Rickettsia bellii (strain OSU 85-389).